The chain runs to 208 residues: Uracil phosphoribosyltransferase (208 aa).

Residues arginine 78, arginine 103, and 130–138 (DPMLATGGS) each bind 5-phospho-alpha-D-ribose 1-diphosphate. Uracil contacts are provided by residues isoleucine 193 and 198–200 (GDA). A 5-phospho-alpha-D-ribose 1-diphosphate-binding site is contributed by aspartate 199.

Belongs to the UPRTase family. Mg(2+) is required as a cofactor.

The enzyme catalyses UMP + diphosphate = 5-phospho-alpha-D-ribose 1-diphosphate + uracil. It participates in pyrimidine metabolism; UMP biosynthesis via salvage pathway; UMP from uracil: step 1/1. Allosterically activated by GTP. Its function is as follows. Catalyzes the conversion of uracil and 5-phospho-alpha-D-ribose 1-diphosphate (PRPP) to UMP and diphosphate. The polypeptide is Uracil phosphoribosyltransferase (Psychromonas ingrahamii (strain DSM 17664 / CCUG 51855 / 37)).